Reading from the N-terminus, the 134-residue chain is Small ribosomal subunit protein uS9 (134 aa).

It belongs to the universal ribosomal protein uS9 family.

The protein is Small ribosomal subunit protein uS9 of Pseudothermotoga lettingae (strain ATCC BAA-301 / DSM 14385 / NBRC 107922 / TMO) (Thermotoga lettingae).